Here is a 112-residue protein sequence, read N- to C-terminus: Ribosome-binding factor A (112 aa).

This sequence belongs to the RbfA family. As to quaternary structure, monomer. Binds 30S ribosomal subunits, but not 50S ribosomal subunits or 70S ribosomes.

The protein resides in the cytoplasm. One of several proteins that assist in the late maturation steps of the functional core of the 30S ribosomal subunit. Associates with free 30S ribosomal subunits (but not with 30S subunits that are part of 70S ribosomes or polysomes). Required for efficient processing of 16S rRNA. May interact with the 5'-terminal helix region of 16S rRNA. This chain is Ribosome-binding factor A, found in Ruthia magnifica subsp. Calyptogena magnifica.